We begin with the raw amino-acid sequence, 2726 residues long: Filamin-C (2726 aa).

The actin-binding stretch occupies residues 1–260 (MMNNSNYSDA…VMTYLSQFPK (260 aa)). The residue at position 5 (S5) is a Phosphoserine. 2 consecutive Calponin-homology (CH) domains span residues 37–143 (KIQQ…LHYS) and 160–263 (QTPK…KAKL). Filamin repeat units follow at residues 271-369 (SKQL…EVNV), 371-469 (MALG…PVHV), 470-566 (AEAC…EVQV), 567-659 (SPEA…IAHI), 663-759 (PPDC…RVNV), 760-862 (GEGS…HIKV), 863-961 (DPSH…VVNV), 962-1057 (APPL…AVEG), 1058-1150 (VLPP…KATI), 1151-1245 (QPVF…RVHV), 1246-1345 (QPAV…RVGV), 1346-1438 (TEGC…RVPV), 1439-1534 (KDVV…KIKV), 1535-1631 (LPSH…RIHA), and 1636-1735 (DASK…HVLA). R1003 bears the Omega-N-methylarginine mark. Phosphoserine is present on residues S1162 and S1339. Residues 1736-1759 (CDPLPHVEEPAEMLQMRQPYAPLR) form a hinge 1 region. 4 Filamin repeats span residues 1760 to 1855 (PGTC…QFYV), 1856 to 1947 (DAIN…TAKI), 1948 to 2034 (TGDD…KILV), and 2037 to 2129 (SEIG…TVKV). Residue S2043 is modified to Phosphoserine. An intradomain insert; mediate targeting to Z lines region spans residues 2163-2244 (GNWFQMVSAQ…FGSITRQQEG (82 aa)). Over residues 2193-2210 (EISKTRGGETKREVRVEE) the composition is skewed to basic and acidic residues. The interval 2193–2214 (EISKTRGGETKREVRVEESTQV) is disordered. The Filamin 20; mediates interaction with XIRP1 repeat unit spans residues 2212–2307 (TQVGGDPFPA…VPGSPFQFTV (96 aa)). Residues S2234 and S2237 each carry the phosphoserine modification. The residue at position 2239 (T2239) is a Phosphothreonine. A compositionally biased stretch (polar residues) spans 2241–2260 (QQEGEASSQDMTAQVTSPSG). A disordered region spans residues 2241-2261 (QQEGEASSQDMTAQVTSPSGK). Filamin repeat units lie at residues 2310–2402 (LGEG…VVPV), 2404–2497 (SLSD…KIRV), and 2501–2593 (SQAG…KAKV). The interaction with INPPL1 stretch occupies residues 2404–2725 (SLSDDARRLT…VPGSPFKVNV (322 aa)). 6 positions are modified to phosphoserine: S2587, S2618, S2621, S2633, S2715, and S2719. The interval 2594-2630 (TGPRLSGGHSLHETSTVLVETVTKSSSSRGASYSSIP) is hinge 2. A self-association site, tail region spans residues 2594–2726 (TGPRLSGGHS…PGSPFKVNVP (133 aa)). The Filamin 24 repeat unit spans residues 2631 to 2725 (KFSSDASKVV…VPGSPFKVNV (95 aa)).

Belongs to the filamin family. Homodimer; the filamin repeat 24 and the second hinge domain are important for dimer formation. Interacts with FLNB, INPPL1, ITGB1A, KCND2, MYOT, MYOZ1 and MYOZ3. Interacts with sarcoglycans SGCD and SGCG. Interacts (via filament repeats 17-18, 20-21 and 24) with USP25 (isoform USP25m only). Interacts with FBLIM1. Interacts with XIRP1; this interaction is mediated by filamin 20 repeat. Interacts with KY. Interacts with IGFN1. Interacts with MICALL2. Interacts with ANK3. Interacts with MICALL2. Interacts with ANK3. Interacts with SYNPO2. In terms of processing, ubiquitinated by FBXL22, leading to proteasomal degradation.

The protein localises to the cytoplasm. Its subcellular location is the membrane. It is found in the cytoskeleton. It localises to the myofibril. The protein resides in the sarcomere. The protein localises to the z line. Functionally, muscle-specific filamin, which plays a central role in sarcomere assembly and organization. Critical for normal myogenesis, it probably functions as a large actin-cross-linking protein with structural functions at the Z lines in muscle cells. May be involved in reorganizing the actin cytoskeleton in response to signaling events. This Mus musculus (Mouse) protein is Filamin-C (Flnc).